Reading from the N-terminus, the 235-residue chain is MDIKLKDFEGPLDLLLHLVSKYEVDIYDVPIVEVIEQYLAYIATLQAMRLEVAGEYMLMASQLMLIKSRNLLPKVVESNPIEDDPEMELLSQLEEYRRFKVLSEELANQHQERAKYFSKPKQEVIFEDAILLHDKSVMDLFLTFSQMMSQKQKELSNSQTVIEKEDYRIEDMMIVIERHFNLKKKTTLQEVFADCQTKSEMITLFLAMLELIKLHQITVEQDSNFSQVILRKEEK.

The protein belongs to the ScpA family. As to quaternary structure, component of a cohesin-like complex composed of ScpA, ScpB and the Smc homodimer, in which ScpA and ScpB bind to the head domain of Smc. The presence of the three proteins is required for the association of the complex with DNA.

It is found in the cytoplasm. Functionally, participates in chromosomal partition during cell division. May act via the formation of a condensin-like complex containing Smc and ScpB that pull DNA away from mid-cell into both cell halves. This is Segregation and condensation protein A from Streptococcus agalactiae serotype Ia (strain ATCC 27591 / A909 / CDC SS700).